Consider the following 126-residue polypeptide: Small ribosomal subunit protein uS13 (126 aa).

The disordered stretch occupies residues 94 to 126; sequence RGLPVHGQRTSTNARTRKGPRRAIAGKKKPGKK. The segment covering 108–126 has biased composition (basic residues); that stretch reads RTRKGPRRAIAGKKKPGKK.

It belongs to the universal ribosomal protein uS13 family. Part of the 30S ribosomal subunit. Forms a loose heterodimer with protein S19. Forms two bridges to the 50S subunit in the 70S ribosome.

Located at the top of the head of the 30S subunit, it contacts several helices of the 16S rRNA. In the 70S ribosome it contacts the 23S rRNA (bridge B1a) and protein L5 of the 50S subunit (bridge B1b), connecting the 2 subunits; these bridges are implicated in subunit movement. Contacts the tRNAs in the A and P-sites. This is Small ribosomal subunit protein uS13 from Streptomyces griseus subsp. griseus (strain JCM 4626 / CBS 651.72 / NBRC 13350 / KCC S-0626 / ISP 5235).